We begin with the raw amino-acid sequence, 210 residues long: Redox-sensing transcriptional repressor Rex (210 aa).

The segment at residues 17–56 (SYLHLVKKAEADKLEYISGTVIAEELELEPIQVRKDLTIT) is a DNA-binding region (H-T-H motif). NAD(+) is bound at residue 91 to 96 (GAGSLG).

It belongs to the transcriptional regulatory Rex family. In terms of assembly, homodimer.

It localises to the cytoplasm. In terms of biological role, modulates transcription in response to changes in cellular NADH/NAD(+) redox state. The sequence is that of Redox-sensing transcriptional repressor Rex from Treponema denticola (strain ATCC 35405 / DSM 14222 / CIP 103919 / JCM 8153 / KCTC 15104).